The primary structure comprises 174 residues: MMNPTNSRDVPLYIYHAGQCDPKKCTGRKMARFELARLYDKISRLPRSAILLDPMAEKALSPADDPKKGIIVLDCSWEEVERVFPELEKLNLEHRALPYMLAGNPVNFGRPFKLNSAEAFAAALYILGYKEQAEKVMSKFNWGHSFLELNREPLDEYATAKNSSEIVEIQSHYI.

Residues Thr26, Leu73, Leu97, and Ser116 each coordinate S-adenosyl-L-methionine.

The protein belongs to the TDD superfamily. TSR3 family.

Its subcellular location is the cytoplasm. The catalysed reaction is an N(1)-methylpseudouridine in rRNA + S-adenosyl-L-methionine = N(1)-methyl-N(3)-[(3S)-3-amino-3-carboxypropyl]pseudouridine in rRNA + S-methyl-5'-thioadenosine + H(+). Aminocarboxypropyltransferase that catalyzes the aminocarboxypropyl transfer on pseudouridine corresponding to position 914 in M.jannaschii 16S rRNA. It constitutes the last step in biosynthesis of the hypermodified N1-methyl-N3-(3-amino-3-carboxypropyl) pseudouridine (m1acp3-Psi). The sequence is that of 16S rRNA aminocarboxypropyltransferase from Methanosarcina acetivorans (strain ATCC 35395 / DSM 2834 / JCM 12185 / C2A).